A 291-amino-acid polypeptide reads, in one-letter code: Ribosomal RNA small subunit methyltransferase H (291 aa).

S-adenosyl-L-methionine is bound by residues 25 to 27, D45, F73, D88, and Q95; that span reads GGH.

This sequence belongs to the methyltransferase superfamily. RsmH family.

It localises to the cytoplasm. The catalysed reaction is cytidine(1402) in 16S rRNA + S-adenosyl-L-methionine = N(4)-methylcytidine(1402) in 16S rRNA + S-adenosyl-L-homocysteine + H(+). Functionally, specifically methylates the N4 position of cytidine in position 1402 (C1402) of 16S rRNA. This chain is Ribosomal RNA small subunit methyltransferase H, found in Flavobacterium psychrophilum (strain ATCC 49511 / DSM 21280 / CIP 103535 / JIP02/86).